Here is a 28-residue protein sequence, read N- to C-terminus: Kalata-B12 (28 aa).

Positions 1–28 form a cross-link, cyclopeptide (Gly-Asp); sequence GSLCGDTCFVLGCNDSSCSCNYPICVKD. Intrachain disulfides connect cysteine 4–cysteine 18, cysteine 8–cysteine 20, and cysteine 13–cysteine 25.

In terms of processing, this is a cyclic peptide.

Probably participates in a plant defense mechanism. This chain is Kalata-B12, found in Oldenlandia affinis.